The following is a 550-amino-acid chain: Hydroxylamine reductase (550 aa).

Positions 3, 6, 18, and 25 each coordinate [2Fe-2S] cluster. Hybrid [4Fe-2O-2S] cluster contacts are provided by H249, E273, C317, C405, C433, C458, E492, and K494. Cysteine persulfide is present on C405.

Belongs to the HCP family. [2Fe-2S] cluster is required as a cofactor. Hybrid [4Fe-2O-2S] cluster serves as cofactor.

It localises to the cytoplasm. It carries out the reaction A + NH4(+) + H2O = hydroxylamine + AH2 + H(+). In terms of biological role, catalyzes the reduction of hydroxylamine to form NH(3) and H(2)O. This chain is Hydroxylamine reductase, found in Pectobacterium atrosepticum (strain SCRI 1043 / ATCC BAA-672) (Erwinia carotovora subsp. atroseptica).